Here is an 81-residue protein sequence, read N- to C-terminus: Insulin (81 aa).

Cystine bridges form between Cys7-Cys67, Cys19-Cys80, and Cys66-Cys71. A propeptide spans 33 to 58 (c peptide); it reads DVEQPLVNGPLHGEVGELPFQHEEYQ.

Belongs to the insulin family. In terms of assembly, heterodimer of a B chain and an A chain linked by two disulfide bonds.

It localises to the secreted. Its function is as follows. Insulin decreases blood glucose concentration. It increases cell permeability to monosaccharides, amino acids and fatty acids. It accelerates glycolysis, the pentose phosphate cycle, and glycogen synthesis in liver. This chain is Insulin (INS), found in Anas platyrhynchos (Mallard).